A 510-amino-acid polypeptide reads, in one-letter code: Portal protein (510 aa).

Belongs to the podoviridae head-to-tail connector protein family. Homododecamer.

It localises to the virion. Functionally, forms the portal vertex of the capsid. This portal plays critical roles in head assembly, genome packaging, neck/tail attachment, and genome ejection. The portal protein multimerizes as a single ring-shaped homododecamer arranged around a central channel. In Pseudomonas phage phiKMV, this protein is Portal protein.